The following is a 198-amino-acid chain: MELPDPVRQRLSNLSLTVFGDSSRTGPESSDAADNEMVSSLALQMSLYFNSYFFPLWWVSCIVMLHLKYSILPDYYKFIVVTVVILITLIEAIRLYLGCMGNLQEKVPELAGFWLLSLLLQLPLILFLLLNDGLRNLPLEKAIHIIFTIFLTFQVISAFLTLKKMVNQLAARFHLQDFDQLSSSSAAVRRVRQCTEEL.

Asn13 is a glycosylation site (N-linked (GlcNAc...) asparagine). The next 4 helical transmembrane spans lie at 47-67, 78-98, 110-130, and 142-162; these read LYFN…MLHL, FIVV…LYLG, LAGF…FLLL, and AIHI…FLTL.

It belongs to the TMEM17 family. As to quaternary structure, part of the tectonic-like complex (also named B9 complex).

The protein resides in the cell projection. The protein localises to the cilium membrane. In terms of biological role, transmembrane component of the tectonic-like complex, a complex localized at the transition zone of primary cilia and acting as a barrier that prevents diffusion of transmembrane proteins between the cilia and plasma membranes. Required for ciliogenesis and sonic hedgehog/SHH signaling. This Mus musculus (Mouse) protein is Transmembrane protein 17 (Tmem17).